A 485-amino-acid chain; its full sequence is MKKQPQKTLLAIALSVVSGTAMSHGYVSAVENGVAEARVTLCKFAASTGEKNTNCGAIQYEPQSVEGPDGFPASGPRDGKIASAESALANALDEQTADRWVKHPIQTGAQNFEWTFTANHVTKDWKYYITKPDWNPNQPLARASFDLTPFCVVDGGMVQPPKRVSHTCNVPEREGYQVILAVWDVGDTAASFYNVIDVKFDGDGPALPDWQQGGQIIPTMNLNVGDTVFTRVFDLAGENPAYTTELAINSDALTVANNWSHALAVKINQTQSEIAAGQLNEQNQFVPVYGTNPIFLKSGSNLQRVEIGYKIETPAPEYDVTLSGLASEYQISDVPVTLDLSLQATGDITTELIVYNHHKEPLAFESVAMKDGENKAVSMTLSKSEAGHHMLVTKVLDKDGKLQKQQTSDFMLTETQTPPPSNDYDFVFPDGLSSYTAGTKVLASDGAIYQCKPFPYSGYCVQWTPTATQYQPGTGSHWQMAWDKL.

The first 29 residues, 1–29 (MKKQPQKTLLAIALSVVSGTAMSHGYVSA), serve as a signal peptide directing secretion. One can recognise a Chitin-binding type-4 domain in the interval 30 to 200 (VENGVAEARV…SFYNVIDVKF (171 aa)). Positions 437–478 (AGTKVLASDGAIYQCKPFPYSGYCVQWTPTATQYQPGTGSHW) constitute a Chitin-binding type-3 domain.

The protein belongs to the GbpA family.

It is found in the secreted. Functionally, probably interacts with GlcNAc residues. May promote attachment to both epithelial cell surfaces and chitin. The polypeptide is GlcNAc-binding protein A (Vibrio vulnificus (strain YJ016)).